The chain runs to 738 residues: Catalase-peroxidase (738 aa).

Residues 1–24 (MEPLFPKRLLSIAVLCVASATAQA) form the signal peptide. The segment at residues 104-226 (WHAAGTYRMI…FGATEMGLIY (123 aa)) is a cross-link (tryptophyl-tyrosyl-methioninium (Trp-Tyr) (with M-252)). His105 serves as the catalytic Proton acceptor. The segment at 191–213 (EEVNWGPEGQWLTDRRHSGDRKL) is disordered. A compositionally biased stretch (basic and acidic residues) spans 203–213 (TDRRHSGDRKL). Residues 226-252 (YVNPEGPHGNPDPIAAAHDIRQAFGRM) constitute a cross-link (tryptophyl-tyrosyl-methioninium (Tyr-Met) (with W-104)). Heme b is bound at residue His267.

The protein belongs to the peroxidase family. Peroxidase/catalase subfamily. As to quaternary structure, homodimer or homotetramer. The cofactor is heme b. In terms of processing, formation of the three residue Trp-Tyr-Met cross-link is important for the catalase, but not the peroxidase activity of the enzyme.

It carries out the reaction H2O2 + AH2 = A + 2 H2O. The enzyme catalyses 2 H2O2 = O2 + 2 H2O. Its function is as follows. Bifunctional enzyme with both catalase and broad-spectrum peroxidase activity. The chain is Catalase-peroxidase from Saccharophagus degradans (strain 2-40 / ATCC 43961 / DSM 17024).